We begin with the raw amino-acid sequence, 156 residues long: C-type lectin lectoxin-Lei1 (156 aa).

Positions 1–23 (MRRFLFLSLGVLVVAFSLNGIGA) are cleaved as a signal peptide. 3 cysteine pairs are disulfide-bonded: Cys27–Cys38, Cys55–Cys154, and Cys129–Cys146. In terms of domain architecture, C-type lectin spans 34 to 155 (FDRFCYKVIK…CESRNIFICK (122 aa)). Residues Asn60 and Asn99 are each glycosylated (N-linked (GlcNAc...) asparagine). The Sugar-binding signature appears at 119–121 (KRN). Ca(2+) is bound at residue Asn142.

This sequence belongs to the true venom lectin family. In terms of tissue distribution, expressed by the venom gland.

Its subcellular location is the secreted. Its function is as follows. Lectin which recognizes specific carbohydrate structures and agglutinates a variety of animal cells by binding to cell-surface glycoproteins and glycolipids. May be a calcium-dependent lectin. The protein is C-type lectin lectoxin-Lei1 of Leioheterodon madagascariensis (Malagasy giant hognose snake).